Here is a 221-residue protein sequence, read N- to C-terminus: MAFVKSGWLLRQSTILKRWKKNWFDLWSDGHLIYYDDQTRQSIEDKVHMPVDCINIRTGHECRDIQPPDGKPRDCLLQIVCRDGKTISLCAESTDDCLAWKFTLQDSRTNTAYVGSAILSEETAVAASPPPYAAYATPTPEVYGYGPYSGAYPAGTQVVYAANGQAYAVPYQYPYAGVYGQQPANQVIIRERYRDNDSDLALGMLAGAATGMALGSLFWVF.

One can recognise a PH domain in the interval 2–109 (AFVKSGWLLR…WKFTLQDSRT (108 aa)). Residue Lys20 coordinates a 1,2-diacyl-sn-glycero-3-phospho-L-serine.

In terms of tissue distribution, highly expressed in brain, retina, heart and kidney. Detected at lower levels in lung, muscle and nerve.

It is found in the recycling endosome membrane. Functionally, involved in retrograde transport of recycling endosomes. The sequence is that of Pleckstrin homology domain-containing family B member 2 (Plekhb2) from Mus musculus (Mouse).